A 93-amino-acid chain; its full sequence is Probable endoribonuclease MazF1 (93 aa).

This sequence belongs to the PemK/MazF family. Forms a complex with cognate antitoxin MazE1.

Toxic component of a type II toxin-antitoxin (TA) system, its cognate antitoxin is MazE1. Probably an endoribonuclease. The protein is Probable endoribonuclease MazF1 (mazF1) of Mycobacterium tuberculosis (strain ATCC 25618 / H37Rv).